Here is an 873-residue protein sequence, read N- to C-terminus: Bifunctional heparan sulfate N-deacetylase/N-sulfotransferase 3 (873 aa).

Over 1–13 the chain is Cytoplasmic; the sequence is MSFIMKLHRHFQR. Residues 14–34 form a helical; Signal-anchor for type II membrane protein membrane-spanning segment; the sequence is TVILLATFCMVSIIISAYYLY. Over 35–873 the chain is Lumenal; the sequence is SGYKQENELS…WLRQELQKVR (839 aa). Positions 36–589 are heparan sulfate N-deacetylase 3; that stretch reads GYKQENELSE…KRHRDIWSKE (554 aa). N146, N226, N342, and N392 each carry an N-linked (GlcNAc...) asparagine glycan. Residues 590–873 form a heparan sulfate N-sulfotransferase 3 region; it reads KTCDRLPKFL…WLRQELQKVR (284 aa). The active-site For sulfotransferase activity is the K605. 3'-phosphoadenylyl sulfate is bound at residue 605 to 609; sequence KTGTT. N-linked (GlcNAc...) asparagine glycosylation occurs at N658. S703 contacts 3'-phosphoadenylyl sulfate. Residue N794 is glycosylated (N-linked (GlcNAc...) asparagine). Cysteines 809 and 819 form a disulfide. 824 to 828 lines the 3'-phosphoadenylyl sulfate pocket; it reads KGRKY.

Belongs to the sulfotransferase 1 family. NDST subfamily. As to quaternary structure, monomer. Expressed in brain, kidney, liver, fetal and adult lung, adult pancreas, placenta, fetal spleen and fetal thymus. Not detected in adult/ fetal heart and skeletal muscle.

It is found in the golgi apparatus membrane. The catalysed reaction is alpha-D-glucosaminyl-[heparan sulfate](n) + 3'-phosphoadenylyl sulfate = N-sulfo-alpha-D-glucosaminyl-[heparan sulfate](n) + adenosine 3',5'-bisphosphate + 2 H(+). It participates in glycan metabolism; heparan sulfate biosynthesis. The protein operates within glycan metabolism; heparin biosynthesis. Its function is as follows. Essential bifunctional enzyme that catalyzes both the N-deacetylation and the N-sulfation of glucosamine (GlcNAc) of the glycosaminoglycan in heparan sulfate. Modifies the GlcNAc-GlcA disaccharide repeating sugar backbone to make N-sulfated heparosan, a prerequisite substrate for later modifications in heparin biosynthesis. Has high deacetylase activity but low sulfotransferase activity. The protein is Bifunctional heparan sulfate N-deacetylase/N-sulfotransferase 3 of Homo sapiens (Human).